We begin with the raw amino-acid sequence, 2120 residues long: Separin (2120 aa).

At serine 1126 the chain carries Phosphoserine. A disordered region spans residues 1299–1355; that stretch reads IKSVPGSEPSKTQGQKRSGRGRQKLASAPLRLNNTSQKGLEGRGLPCTPKPPDRIRQ. 2 positions are modified to phosphoserine: serine 1396 and serine 1399. Disordered stretches follow at residues 1412 to 1485 and 1507 to 1561; these read AEEP…PEIM and GSDG…PRLR. Composition is skewed to basic residues over residues 1418–1432 and 1454–1463; these read RGTA…RKGL and RSRRAKKVAS. The segment covering 1464–1473 has biased composition (basic and acidic residues); the sequence is RHCEERRPQR. The residue at position 1508 (serine 1508) is a Phosphoserine. The span at 1548–1558 shows a compositional bias: basic and acidic residues; sequence PDKESDKDLGP. The region spanning 1945–2040 is the Peptidase C50 domain; it reads PRSTFYVLNP…SAALAVRGNL (96 aa). Cysteine 2029 is a catalytic residue.

As to quaternary structure, interacts with PTTG1. Interacts with RAD21. Post-translationally, autocleaves. This function, which is not essential for its protease activity, is unknown. In terms of processing, phosphorylated by CDK1. There are 8 Ser/Thr phosphorylation sites. Among them, Ser-1126 phosphorylation is the major site, which conducts to the enzyme inactivation.

Its subcellular location is the cytoplasm. The protein resides in the nucleus. It catalyses the reaction All bonds known to be hydrolyzed by this endopeptidase have arginine in P1 and an acidic residue in P4. P6 is often occupied by an acidic residue or by a hydroxy-amino-acid residue, the phosphorylation of which enhances cleavage.. Regulated by at least two independent mechanisms. First, it is inactivated via its interaction with securin/PTTG1, which probably covers its active site. The association with PTTG1 is not only inhibitory, since PTTG1 is also required for activating it, the enzyme being inactive in cells in which PTTG1 is absent. PTTG1 degradation at anaphase, liberates it and triggers RAD21 cleavage. Second, phosphorylation at Ser-1126 inactivates it. The complete phosphorylation during mitosis, is removed when cells undergo anaphase. Activation of the enzyme at the metaphase-anaphase transition probably requires the removal of both securin and inhibitory phosphate. In terms of biological role, caspase-like protease, which plays a central role in the chromosome segregation by cleaving the SCC1/RAD21 subunit of the cohesin complex at the onset of anaphase. During most of the cell cycle, it is inactivated by different mechanisms. This Homo sapiens (Human) protein is Separin (ESPL1).